The following is a 485-amino-acid chain: P2X purinoceptor 2 (485 aa).

Residues 1 to 43 (MAAAQPRLPAGAAMVRRLARGCWSAFWDYETPKVIVVRNRRLG) are Cytoplasmic-facing. Intrachain disulfides connect Cys-22–Cys-443, Cys-126–Cys-177, Cys-137–Cys-160, Cys-143–Cys-171, Cys-227–Cys-237, and Cys-271–Cys-280. A helical transmembrane segment spans residues 44 to 64 (FVHRMVQLLILLYFVWYVFIV). Residues 65–339 (QKSYQDSETG…IVHGQAGKFS (275 aa)) lie on the Extracellular side of the membrane. 2 residues coordinate ATP: Lys-82 and Lys-84. Asn-195 is a glycosylation site (N-linked (GlcNAc...) asparagine). ATP is bound at residue Thr-197. A glycan (N-linked (GlcNAc...) asparagine) is linked at Asn-252. ATP contacts are provided by Ser-297, Asn-301, and Arg-303. Asn-311 carries N-linked (GlcNAc...) asparagine glycosylation. Lys-321 serves as a coordination point for ATP. The pore-forming motif stretch occupies residues 322-335 (AYGIRIDVIVHGQA). A helical transmembrane segment spans residues 340 to 360 (LIPTIINLATALTSIGVGSFL). Over 361–485 (CDWILLTFMN…STDPKGLAQL (125 aa)) the chain is Cytoplasmic. The interval 406–485 (PPPSHYSQDQ…STDPKGLAQL (80 aa)) is disordered. Residues 420–436 (PSGEGPALGEGAELPLA) show a composition bias toward low complexity. The span at 469-478 (PSQQDSTSTD) shows a compositional bias: polar residues.

This sequence belongs to the P2X receptor family. As to quaternary structure, homotrimer and heterotrimer; functional P2XRs are organized as homomeric and heteromeric trimers. Homotrimer. Forms heterotrimer with P2XR1. Forms heterotrimer with P2XR3. Forms heterotrimer with P2XR6.

It is found in the cell membrane. It carries out the reaction Ca(2+)(in) = Ca(2+)(out). The enzyme catalyses K(+)(in) = K(+)(out). The catalysed reaction is Na(+)(in) = Na(+)(out). With respect to regulation, fast activation by external ATP. Exhibits slow desensitization during prolonged ATP activation. Not sensitive to the ATP agonist:alpha/beta-methylene-ATP. ATP-gated nonselective transmembrane cation channel permeable to potassium, sodium and calcium. Activation by extracellular ATP induces a variety of cellular responses, such as excitatory postsynaptic responses in sensory neurons, neuromuscular junctions (NMJ) formation, hearing, perception of taste and peristalsis. In the inner ear, regulates sound transduction and auditory neurotransmission, outer hair cell electromotility, inner ear gap junctions, and K(+) recycling. Mediates synaptic transmission between neurons and from neurons to smooth muscle. This chain is P2X purinoceptor 2 (P2rx2), found in Mus musculus (Mouse).